Reading from the N-terminus, the 336-residue chain is 3-isopropylmalate dehydrogenase (336 aa).

Substrate contacts are provided by Arg-86, Arg-96, Arg-117, and Asp-201. Mg(2+) is bound by residues Asp-201, Asp-225, and Asp-229. 258 to 270 is an NAD(+) binding site; that stretch reads GAAFDIAGKGIAN.

This sequence belongs to the isocitrate and isopropylmalate dehydrogenases family. As to quaternary structure, homotetramer. Mg(2+) serves as cofactor. It depends on Mn(2+) as a cofactor.

The protein resides in the cytoplasm. The enzyme catalyses (2R,3S)-3-isopropylmalate + NAD(+) = 4-methyl-2-oxopentanoate + CO2 + NADH. The protein operates within amino-acid biosynthesis; L-leucine biosynthesis; L-leucine from 3-methyl-2-oxobutanoate: step 3/4. Catalyzes the oxidation of 3-carboxy-2-hydroxy-4-methylpentanoate (3-isopropylmalate) to 3-carboxy-4-methyl-2-oxopentanoate. The product decarboxylates to 4-methyl-2 oxopentanoate. In Saccharolobus solfataricus (strain ATCC 35092 / DSM 1617 / JCM 11322 / P2) (Sulfolobus solfataricus), this protein is 3-isopropylmalate dehydrogenase (leuB).